We begin with the raw amino-acid sequence, 341 residues long: Retinol dehydrogenase 10-B (341 aa).

Residues 3-23 (IVLEFFLVTFRVLWAFVLAAA) form a helical; Signal-anchor membrane-spanning segment. 40 to 64 (LITGAGSGLGRLFALEFARRRAQLV) is a binding site for NADP(+). A substrate-binding site is contributed by Ser197. Tyr210 (proton acceptor) is an active-site residue.

Belongs to the short-chain dehydrogenases/reductases (SDR) family.

The protein resides in the microsome membrane. Its subcellular location is the endoplasmic reticulum membrane. The enzyme catalyses all-trans-retinol + NADP(+) = all-trans-retinal + NADPH + H(+). Its pathway is cofactor metabolism; retinol metabolism. In terms of biological role, retinol dehydrogenase with a clear preference for NADP. Converts all-trans-retinol to all-trans-retinal. Has no detectable activity towards 11-cis-retinol, 9-cis-retinol and 13-cis-retinol. This chain is Retinol dehydrogenase 10-B (rdh10-b), found in Xenopus laevis (African clawed frog).